The following is a 367-amino-acid chain: tRNA 2-selenouridine synthase (367 aa).

The Rhodanese domain maps to 12-136 (FLNDRPLMDA…LRGFLIDTLE (125 aa)). Cys-95 serves as the catalytic S-selanylcysteine intermediate.

It belongs to the SelU family. Monomer.

The catalysed reaction is 5-methylaminomethyl-2-thiouridine(34) in tRNA + selenophosphate + (2E)-geranyl diphosphate + H2O + H(+) = 5-methylaminomethyl-2-selenouridine(34) in tRNA + (2E)-thiogeraniol + phosphate + diphosphate. It carries out the reaction 5-methylaminomethyl-2-thiouridine(34) in tRNA + (2E)-geranyl diphosphate = 5-methylaminomethyl-S-(2E)-geranyl-thiouridine(34) in tRNA + diphosphate. The enzyme catalyses 5-methylaminomethyl-S-(2E)-geranyl-thiouridine(34) in tRNA + selenophosphate + H(+) = 5-methylaminomethyl-2-(Se-phospho)selenouridine(34) in tRNA + (2E)-thiogeraniol. It catalyses the reaction 5-methylaminomethyl-2-(Se-phospho)selenouridine(34) in tRNA + H2O = 5-methylaminomethyl-2-selenouridine(34) in tRNA + phosphate. Functionally, involved in the post-transcriptional modification of the uridine at the wobble position (U34) of tRNA(Lys), tRNA(Glu) and tRNA(Gln). Catalyzes the conversion of 2-thiouridine (S2U-RNA) to 2-selenouridine (Se2U-RNA). Acts in a two-step process involving geranylation of 2-thiouridine (S2U) to S-geranyl-2-thiouridine (geS2U) and subsequent selenation of the latter derivative to 2-selenouridine (Se2U) in the tRNA chain. This chain is tRNA 2-selenouridine synthase, found in Pseudomonas fluorescens (strain Pf0-1).